A 505-amino-acid chain; its full sequence is Glycerol kinase (505 aa).

Thr-12 is an ADP binding site. Thr-12, Thr-13, and Ser-14 together coordinate ATP. Thr-12 lines the sn-glycerol 3-phosphate pocket. Residue Arg-16 participates in ADP binding. The sn-glycerol 3-phosphate site is built by Arg-82, Glu-83, Tyr-134, and Asp-246. Glycerol is bound by residues Arg-82, Glu-83, Tyr-134, Asp-246, and Gln-247. Residues Thr-268 and Gly-312 each contribute to the ADP site. Residues Thr-268, Gly-312, Gln-316, and Gly-413 each contribute to the ATP site. Residues Gly-413 and Asn-417 each coordinate ADP.

This sequence belongs to the FGGY kinase family.

It catalyses the reaction glycerol + ATP = sn-glycerol 3-phosphate + ADP + H(+). It participates in polyol metabolism; glycerol degradation via glycerol kinase pathway; sn-glycerol 3-phosphate from glycerol: step 1/1. Inhibited by fructose 1,6-bisphosphate (FBP). In terms of biological role, key enzyme in the regulation of glycerol uptake and metabolism. Catalyzes the phosphorylation of glycerol to yield sn-glycerol 3-phosphate. The sequence is that of Glycerol kinase from Beutenbergia cavernae (strain ATCC BAA-8 / DSM 12333 / CCUG 43141 / JCM 11478 / NBRC 16432 / NCIMB 13614 / HKI 0122).